The following is a 213-amino-acid chain: Protein-L-isoaspartate O-methyltransferase 1 (213 aa).

Residue Ser64 is part of the active site.

The protein belongs to the methyltransferase superfamily. L-isoaspartyl/D-aspartyl protein methyltransferase family.

The protein localises to the cytoplasm. The catalysed reaction is [protein]-L-isoaspartate + S-adenosyl-L-methionine = [protein]-L-isoaspartate alpha-methyl ester + S-adenosyl-L-homocysteine. Catalyzes the methyl esterification of L-isoaspartyl residues in peptides and proteins that result from spontaneous decomposition of normal L-aspartyl and L-asparaginyl residues. It plays a role in the repair and/or degradation of damaged proteins. The sequence is that of Protein-L-isoaspartate O-methyltransferase 1 from Nitrosococcus oceani (strain ATCC 19707 / BCRC 17464 / JCM 30415 / NCIMB 11848 / C-107).